The primary structure comprises 635 residues: Threonine--tRNA ligase (635 aa).

In terms of domain architecture, TGS spans 1-58; sequence MIRVICDNETFELPTGSTAADFASKIKNSHYFAGVVINDQIKDLSTTLSEGDVLKFVT. The interval 237 to 528 is catalytic; sequence DHRVLGTKLD…LIEHFKGRFP (292 aa). Zn(2+) is bound by residues Cys-328, His-379, and His-505.

The protein belongs to the class-II aminoacyl-tRNA synthetase family. Homodimer. It depends on Zn(2+) as a cofactor.

The protein resides in the cytoplasm. It catalyses the reaction tRNA(Thr) + L-threonine + ATP = L-threonyl-tRNA(Thr) + AMP + diphosphate + H(+). Catalyzes the attachment of threonine to tRNA(Thr) in a two-step reaction: L-threonine is first activated by ATP to form Thr-AMP and then transferred to the acceptor end of tRNA(Thr). Also edits incorrectly charged L-seryl-tRNA(Thr). The protein is Threonine--tRNA ligase of Chlamydia felis (strain Fe/C-56) (Chlamydophila felis).